The primary structure comprises 253 residues: DNA polymerase sliding clamp 2 (253 aa).

Belongs to the PCNA family. Homotrimer. The subunits circularize to form a toroid; DNA passes through its center. Replication factor C (RFC) is required to load the toroid on the DNA. Interacts with TIP.

With respect to regulation, inhibited by interaction with the PCNA inhibitor TIP. In terms of biological role, sliding clamp subunit that acts as a moving platform for DNA processing. Responsible for tethering the catalytic subunit of DNA polymerase and other proteins to DNA during high-speed replication. The protein is DNA polymerase sliding clamp 2 of Thermococcus kodakarensis (strain ATCC BAA-918 / JCM 12380 / KOD1) (Pyrococcus kodakaraensis (strain KOD1)).